A 1302-amino-acid polypeptide reads, in one-letter code: DNA-directed RNA polymerase subunit beta (1302 aa).

This sequence belongs to the RNA polymerase beta chain family. The RNAP catalytic core consists of 2 alpha, 1 beta, 1 beta' and 1 omega subunit. When a sigma factor is associated with the core the holoenzyme is formed, which can initiate transcription.

It catalyses the reaction RNA(n) + a ribonucleoside 5'-triphosphate = RNA(n+1) + diphosphate. DNA-dependent RNA polymerase catalyzes the transcription of DNA into RNA using the four ribonucleoside triphosphates as substrates. The chain is DNA-directed RNA polymerase subunit beta from Spiroplasma citri.